Consider the following 921-residue polypeptide: Probable dipeptidyl-aminopeptidase B (921 aa).

The disordered stretch occupies residues 1–87 (MDAPATASRQ…EADTNDLETG (87 aa)). Over 1-108 (MDAPATASRQ…RVGVDRGLKK (108 aa)) the chain is Cytoplasmic. Positions 22–33 (SSLSTVSTTSLV) are enriched in low complexity. Residues 35-45 (DRLHEHNEKSY) are compositionally biased toward basic and acidic residues. Residues 66–75 (PDDDDDDDES) show a composition bias toward acidic residues. The chain crosses the membrane as a helical; Signal-anchor for type II membrane protein span at residues 109 to 129 (VILILAAAFLFAWGAALFVFL). The Vacuolar segment spans residues 130 to 921 (SNKSYKHAST…KPIVEPKARV (792 aa)). N-linked (GlcNAc...) asparagine glycosylation is found at asparagine 131, asparagine 364, and asparagine 577. Catalysis depends on serine 768, which acts as the Charge relay system. A glycan (N-linked (GlcNAc...) asparagine) is linked at asparagine 827. Catalysis depends on charge relay system residues aspartate 845 and histidine 878.

This sequence belongs to the peptidase S9B family.

The protein localises to the vacuole membrane. It catalyses the reaction Release of an N-terminal dipeptide, Xaa-Yaa-|-Zaa-, from a polypeptide, preferentially when Yaa is Pro, provided Zaa is neither Pro nor hydroxyproline.. In terms of biological role, type IV dipeptidyl-peptidase which removes N-terminal dipeptides sequentially from polypeptides having unsubstituted N-termini provided that the penultimate residue is proline. In Colletotrichum graminicola (strain M1.001 / M2 / FGSC 10212) (Maize anthracnose fungus), this protein is Probable dipeptidyl-aminopeptidase B (DAPB).